The chain runs to 464 residues: Asparagine--tRNA ligase (464 aa).

It belongs to the class-II aminoacyl-tRNA synthetase family. As to quaternary structure, homodimer.

It is found in the cytoplasm. The catalysed reaction is tRNA(Asn) + L-asparagine + ATP = L-asparaginyl-tRNA(Asn) + AMP + diphosphate + H(+). This is Asparagine--tRNA ligase from Azobacteroides pseudotrichonymphae genomovar. CFP2.